Here is a 187-residue protein sequence, read N- to C-terminus: Large ribosomal subunit protein bL9 (187 aa).

Positions Ala-155–Ala-187 are disordered. A compositionally biased stretch (acidic residues) spans Glu-166–Ala-187.

It belongs to the bacterial ribosomal protein bL9 family.

Its function is as follows. Binds to the 23S rRNA. The chain is Large ribosomal subunit protein bL9 from Rhodospirillum centenum (strain ATCC 51521 / SW).